We begin with the raw amino-acid sequence, 611 residues long: Angiotensin-converting enzyme (611 aa).

Positions 1 to 17 are cleaved as a signal peptide; it reads MKLLVVTILAGLAVCHG. The Peptidase M2 domain maps to 19–607; it reads TKEEIVATEY…VESLCHQRYK (589 aa). N-linked (GlcNAc...) asparagine glycosylation occurs at Asn-53. Cys-133 and Cys-141 form a disulfide bridge. Residue Asn-196 is glycosylated (N-linked (GlcNAc...) asparagine). A disulfide bridge connects residues Cys-336 and Cys-354. A Zn(2+)-binding site is contributed by His-367. Catalysis depends on Glu-368, which acts as the Proton acceptor. Zn(2+) contacts are provided by His-371 and Glu-395. Residue His-497 is the Proton donor of the active site. Cysteines 522 and 540 form a disulfide. Asn-531 carries an N-linked (GlcNAc...) asparagine glycan.

This sequence belongs to the peptidase M2 family. It depends on Zn(2+) as a cofactor. Expressed in the compound ganglion and in the posterior region of the midgut.

The protein localises to the secreted. Its subcellular location is the extracellular space. It catalyses the reaction Release of a C-terminal dipeptide, oligopeptide-|-Xaa-Yaa, when Xaa is not Pro, and Yaa is neither Asp nor Glu. Thus, conversion of angiotensin I to angiotensin II, with increase in vasoconstrictor activity, but no action on angiotensin II.. Its function is as follows. Involved in the specific maturation or degradation of a number of bioactive peptides. This Haematobia irritans exigua (Buffalo fly) protein is Angiotensin-converting enzyme (ACE).